Here is a 554-residue protein sequence, read N- to C-terminus: Dihydroxy-acid dehydratase (554 aa).

Asp-78 is a binding site for Mg(2+). Cys-119 lines the [2Fe-2S] cluster pocket. The Mg(2+) site is built by Asp-120 and Lys-121. Lys-121 is subject to N6-carboxylysine. A [2Fe-2S] cluster-binding site is contributed by Cys-191. Glu-442 contacts Mg(2+). The Proton acceptor role is filled by Ser-468.

This sequence belongs to the IlvD/Edd family. Homodimer. [2Fe-2S] cluster is required as a cofactor. It depends on Mg(2+) as a cofactor.

It carries out the reaction (2R)-2,3-dihydroxy-3-methylbutanoate = 3-methyl-2-oxobutanoate + H2O. It catalyses the reaction (2R,3R)-2,3-dihydroxy-3-methylpentanoate = (S)-3-methyl-2-oxopentanoate + H2O. Its pathway is amino-acid biosynthesis; L-isoleucine biosynthesis; L-isoleucine from 2-oxobutanoate: step 3/4. It participates in amino-acid biosynthesis; L-valine biosynthesis; L-valine from pyruvate: step 3/4. Functions in the biosynthesis of branched-chain amino acids. Catalyzes the dehydration of (2R,3R)-2,3-dihydroxy-3-methylpentanoate (2,3-dihydroxy-3-methylvalerate) into 2-oxo-3-methylpentanoate (2-oxo-3-methylvalerate) and of (2R)-2,3-dihydroxy-3-methylbutanoate (2,3-dihydroxyisovalerate) into 2-oxo-3-methylbutanoate (2-oxoisovalerate), the penultimate precursor to L-isoleucine and L-valine, respectively. The sequence is that of Dihydroxy-acid dehydratase from Thermotoga petrophila (strain ATCC BAA-488 / DSM 13995 / JCM 10881 / RKU-1).